A 369-amino-acid polypeptide reads, in one-letter code: Dual-specificity RNA methyltransferase RlmN (369 aa).

The Proton acceptor role is filled by Glu96. The Radical SAM core domain occupies 102-338 (DGERGTLCVS…VTTIRTTRGD (237 aa)). Cys109 and Cys344 form a disulfide bridge. Residues Cys116, Cys120, and Cys123 each coordinate [4Fe-4S] cluster. S-adenosyl-L-methionine is bound by residues 169–170 (GE), Ser201, 223–225 (SLH), and Asn301. Cys344 acts as the S-methylcysteine intermediate in catalysis.

This sequence belongs to the radical SAM superfamily. RlmN family. Requires [4Fe-4S] cluster as cofactor.

The protein resides in the cytoplasm. The enzyme catalyses adenosine(2503) in 23S rRNA + 2 reduced [2Fe-2S]-[ferredoxin] + 2 S-adenosyl-L-methionine = 2-methyladenosine(2503) in 23S rRNA + 5'-deoxyadenosine + L-methionine + 2 oxidized [2Fe-2S]-[ferredoxin] + S-adenosyl-L-homocysteine. It carries out the reaction adenosine(37) in tRNA + 2 reduced [2Fe-2S]-[ferredoxin] + 2 S-adenosyl-L-methionine = 2-methyladenosine(37) in tRNA + 5'-deoxyadenosine + L-methionine + 2 oxidized [2Fe-2S]-[ferredoxin] + S-adenosyl-L-homocysteine. Specifically methylates position 2 of adenine 2503 in 23S rRNA and position 2 of adenine 37 in tRNAs. m2A2503 modification seems to play a crucial role in the proofreading step occurring at the peptidyl transferase center and thus would serve to optimize ribosomal fidelity. This is Dual-specificity RNA methyltransferase RlmN from Marinobacter nauticus (strain ATCC 700491 / DSM 11845 / VT8) (Marinobacter aquaeolei).